A 286-amino-acid polypeptide reads, in one-letter code: Phosphatidylserine decarboxylase proenzyme (286 aa).

Residues Asp90, His147, and Ser253 each act as charge relay system; for autoendoproteolytic cleavage activity in the active site. Ser253 (schiff-base intermediate with substrate; via pyruvic acid; for decarboxylase activity) is an active-site residue. Ser253 is subject to Pyruvic acid (Ser); by autocatalysis.

It belongs to the phosphatidylserine decarboxylase family. PSD-B subfamily. Prokaryotic type I sub-subfamily. In terms of assembly, heterodimer of a large membrane-associated beta subunit and a small pyruvoyl-containing alpha subunit. The cofactor is pyruvate. In terms of processing, is synthesized initially as an inactive proenzyme. Formation of the active enzyme involves a self-maturation process in which the active site pyruvoyl group is generated from an internal serine residue via an autocatalytic post-translational modification. Two non-identical subunits are generated from the proenzyme in this reaction, and the pyruvate is formed at the N-terminus of the alpha chain, which is derived from the carboxyl end of the proenzyme. The autoendoproteolytic cleavage occurs by a canonical serine protease mechanism, in which the side chain hydroxyl group of the serine supplies its oxygen atom to form the C-terminus of the beta chain, while the remainder of the serine residue undergoes an oxidative deamination to produce ammonia and the pyruvoyl prosthetic group on the alpha chain. During this reaction, the Ser that is part of the protease active site of the proenzyme becomes the pyruvoyl prosthetic group, which constitutes an essential element of the active site of the mature decarboxylase.

It is found in the cell membrane. The enzyme catalyses a 1,2-diacyl-sn-glycero-3-phospho-L-serine + H(+) = a 1,2-diacyl-sn-glycero-3-phosphoethanolamine + CO2. Its pathway is phospholipid metabolism; phosphatidylethanolamine biosynthesis; phosphatidylethanolamine from CDP-diacylglycerol: step 2/2. Its function is as follows. Catalyzes the formation of phosphatidylethanolamine (PtdEtn) from phosphatidylserine (PtdSer). The sequence is that of Phosphatidylserine decarboxylase proenzyme from Pseudoalteromonas atlantica (strain T6c / ATCC BAA-1087).